The primary structure comprises 227 residues: MSKNIRINEIPSGERPREKLLFYGAQFLSNEELLAIILRTGNKDSNVVELSYRIIHSVGGLNGLFKASAKELMEVKGVKEAKATQILAMCELYKRFKVSELAQVKISKPSDVAKLVLDELRMLRQEVLILINLDTKNKVISKKEIFKGGLNSSLVHPREIFREAVKDSAASIIICHNHPSGDPTPSRDDINITTRLKECGKMMGIELLDHLIIGDNRFISLKEKDIL.

One can recognise an MPN domain in the interval 105 to 227; sequence KISKPSDVAK…FISLKEKDIL (123 aa). Positions 176, 178, and 189 each coordinate Zn(2+). The JAMM motif motif lies at 176 to 189; the sequence is HNHPSGDPTPSRDD.

It belongs to the UPF0758 family.

The protein is UPF0758 protein CPF_2399 of Clostridium perfringens (strain ATCC 13124 / DSM 756 / JCM 1290 / NCIMB 6125 / NCTC 8237 / Type A).